Reading from the N-terminus, the 691-residue chain is Penicillin-binding protein 2D (691 aa).

Topologically, residues methionine 1–phenylalanine 19 are cytoplasmic. A helical; Signal-anchor for type II membrane protein membrane pass occupies residues isoleucine 20–isoleucine 40. Topologically, residues alanine 41–histidine 691 are extracellular. The segment at threonine 55–glutamate 223 is transglycosylase. The active-site Proton donor; for transglycosylase activity is the glutamate 94. The segment at valine 327–glutamate 605 is transpeptidase. Catalysis depends on serine 365, which acts as the Acyl-ester intermediate; for transpeptidase activity. Residues alanine 663–histidine 691 form a disordered region. Positions lysine 664 to histidine 691 are enriched in basic and acidic residues.

It in the N-terminal section; belongs to the glycosyltransferase 51 family. The protein in the C-terminal section; belongs to the transpeptidase family.

It is found in the cell membrane. The enzyme catalyses [GlcNAc-(1-&gt;4)-Mur2Ac(oyl-L-Ala-gamma-D-Glu-L-Lys-D-Ala-D-Ala)](n)-di-trans,octa-cis-undecaprenyl diphosphate + beta-D-GlcNAc-(1-&gt;4)-Mur2Ac(oyl-L-Ala-gamma-D-Glu-L-Lys-D-Ala-D-Ala)-di-trans,octa-cis-undecaprenyl diphosphate = [GlcNAc-(1-&gt;4)-Mur2Ac(oyl-L-Ala-gamma-D-Glu-L-Lys-D-Ala-D-Ala)](n+1)-di-trans,octa-cis-undecaprenyl diphosphate + di-trans,octa-cis-undecaprenyl diphosphate + H(+). The catalysed reaction is Preferential cleavage: (Ac)2-L-Lys-D-Ala-|-D-Ala. Also transpeptidation of peptidyl-alanyl moieties that are N-acyl substituents of D-alanine.. The protein operates within cell wall biogenesis; peptidoglycan biosynthesis. In terms of biological role, involved in the polymerization and cross-linking of spore peptidoglycan. May be required for synthesis of the spore germ cell wall, the first layer of peptidoglycan synthesized on the surface of the inner forespore membrane. This Bacillus subtilis (strain 168) protein is Penicillin-binding protein 2D (pbpG).